Reading from the N-terminus, the 454-residue chain is Bifunctional protein GlmU (454 aa).

The pyrophosphorylase stretch occupies residues 1-226; that stretch reads MSLNVVILAA…PIETEGANNR (226 aa). UDP-N-acetyl-alpha-D-glucosamine is bound by residues 8 to 11, K22, Q73, 78 to 79, 100 to 102, G137, E151, N166, and N224; these read LAAG, GT, and YGD. D102 is a binding site for Mg(2+). N224 lines the Mg(2+) pocket. The linker stretch occupies residues 227–247; sequence VQLAALERAYQARRAEELMLA. An N-acetyltransferase region spans residues 248 to 454; the sequence is GANLRDPARI…GWQRPVKKPK (207 aa). The UDP-N-acetyl-alpha-D-glucosamine site is built by R330 and K348. H360 acts as the Proton acceptor in catalysis. Residues Y363 and N374 each contribute to the UDP-N-acetyl-alpha-D-glucosamine site. Acetyl-CoA is bound by residues A377, 383-384, S402, A420, and R437; that span reads NY.

In the N-terminal section; belongs to the N-acetylglucosamine-1-phosphate uridyltransferase family. It in the C-terminal section; belongs to the transferase hexapeptide repeat family. In terms of assembly, homotrimer. Mg(2+) is required as a cofactor.

The protein localises to the cytoplasm. It catalyses the reaction alpha-D-glucosamine 1-phosphate + acetyl-CoA = N-acetyl-alpha-D-glucosamine 1-phosphate + CoA + H(+). The enzyme catalyses N-acetyl-alpha-D-glucosamine 1-phosphate + UTP + H(+) = UDP-N-acetyl-alpha-D-glucosamine + diphosphate. Its pathway is nucleotide-sugar biosynthesis; UDP-N-acetyl-alpha-D-glucosamine biosynthesis; N-acetyl-alpha-D-glucosamine 1-phosphate from alpha-D-glucosamine 6-phosphate (route II): step 2/2. It functions in the pathway nucleotide-sugar biosynthesis; UDP-N-acetyl-alpha-D-glucosamine biosynthesis; UDP-N-acetyl-alpha-D-glucosamine from N-acetyl-alpha-D-glucosamine 1-phosphate: step 1/1. It participates in bacterial outer membrane biogenesis; LPS lipid A biosynthesis. In terms of biological role, catalyzes the last two sequential reactions in the de novo biosynthetic pathway for UDP-N-acetylglucosamine (UDP-GlcNAc). The C-terminal domain catalyzes the transfer of acetyl group from acetyl coenzyme A to glucosamine-1-phosphate (GlcN-1-P) to produce N-acetylglucosamine-1-phosphate (GlcNAc-1-P), which is converted into UDP-GlcNAc by the transfer of uridine 5-monophosphate (from uridine 5-triphosphate), a reaction catalyzed by the N-terminal domain. The polypeptide is Bifunctional protein GlmU (Shewanella amazonensis (strain ATCC BAA-1098 / SB2B)).